The following is a 314-amino-acid chain: Homoserine O-acetyltransferase (314 aa).

C142 functions as the Acyl-thioester intermediate in the catalytic mechanism. K163 and S192 together coordinate substrate. The active-site Proton acceptor is the H235. Residue E237 is part of the active site. A substrate-binding site is contributed by R249.

It belongs to the MetA family.

It localises to the cytoplasm. The catalysed reaction is L-homoserine + acetyl-CoA = O-acetyl-L-homoserine + CoA. It participates in amino-acid biosynthesis; L-methionine biosynthesis via de novo pathway; O-acetyl-L-homoserine from L-homoserine: step 1/1. In terms of biological role, transfers an acetyl group from acetyl-CoA to L-homoserine, forming acetyl-L-homoserine. This is Homoserine O-acetyltransferase from Azobacteroides pseudotrichonymphae genomovar. CFP2.